An 82-amino-acid chain; its full sequence is Cell division topological specificity factor (82 aa).

This sequence belongs to the MinE family.

Its function is as follows. Prevents the cell division inhibition by proteins MinC and MinD at internal division sites while permitting inhibition at polar sites. This ensures cell division at the proper site by restricting the formation of a division septum at the midpoint of the long axis of the cell. The chain is Cell division topological specificity factor from Hahella chejuensis (strain KCTC 2396).